The following is a 216-amino-acid chain: MPWIVGVSGASGTPYAAAVLRALLAAGESVDLVVSRASRLTLLDETGISFRDAHWRHDLREWLARGADGKPDTFDADVSGVRHWSAGDLAAGPSSGSYPTKGMLIVPASTACVAGVALGLSKDLLQRAASVTLKERRRLVVAVRETPLDGRTLRHLVTLDDAGASVVPASPAFYAGATHIQDLVDFVAGRVLDAAGVGHGLYRRWRGDLGGARPTG.

FMN is bound by residues 9-11 (GAS), S35, and R144. Y174 and R190 together coordinate dimethylallyl phosphate.

This sequence belongs to the UbiX/PAD1 family.

The catalysed reaction is dimethylallyl phosphate + FMNH2 = prenylated FMNH2 + phosphate. Functionally, flavin prenyltransferase that catalyzes the synthesis of the prenylated FMN cofactor (prenyl-FMN) for 4-hydroxy-3-polyprenylbenzoic acid decarboxylase UbiD. The prenyltransferase is metal-independent and links a dimethylallyl moiety from dimethylallyl monophosphate (DMAP) to the flavin N5 and C6 atoms of FMN. This chain is Flavin prenyltransferase UbiX, found in Streptomyces coelicolor (strain ATCC BAA-471 / A3(2) / M145).